The primary structure comprises 327 residues: Glycoprotein integral membrane protein 1 (327 aa).

An N-terminal signal peptide occupies residues 1 to 23; that stretch reads MEGGLSAPLSVRLLLFIALPAAG. Topologically, residues 24–259 are extracellular; the sequence is WLTTNAPRPP…LCRFWSSVVP (236 aa). N-linked (GlcNAc...) asparagine glycosylation is found at N44, N62, and N146. A helical transmembrane segment spans residues 260 to 280; that stretch reads VLFMFLDVMVVGVLGAAGVIA. Over 281–327 the chain is Cytoplasmic; it reads VLKLLFPVCENKGILQVDKMNGISVPIILYPDGSEKTAQKLTDKTDI.

Its subcellular location is the membrane. The sequence is that of Glycoprotein integral membrane protein 1 (Ginm1) from Mus musculus (Mouse).